Here is a 221-residue protein sequence, read N- to C-terminus: Putative hemin import ATP-binding protein HrtA (221 aa).

Residues 3-221 (LVVKDIVKNF…IELEDGKITD (219 aa)) enclose the ABC transporter domain. Residue 39–46 (GASGSGKT) participates in ATP binding.

It belongs to the ABC transporter superfamily. HrtA family. As to quaternary structure, the complex is composed of two ATP-binding proteins (HrtA), two transmembrane proteins (HrtB) and a solute-binding protein.

The protein resides in the cell membrane. Its function is as follows. Part of the ABC transporter complex hrt involved in hemin import. Responsible for energy coupling to the transport system. This Staphylococcus aureus (strain MRSA252) protein is Putative hemin import ATP-binding protein HrtA (hrtA).